Reading from the N-terminus, the 1703-residue chain is Pecanex-like protein 1 (1703 aa).

Transmembrane regions (helical) follow at residues 31–53 (VNAL…YMAL) and 57–74 (MVIV…FLLL). Basic and acidic residues predominate over residues 91–100 (VEHQTRESKG). The segment at 91–126 (VEHQTRESKGSRGGTGGANDPVTRREDSNGLGDPGG) is disordered. N-linked (GlcNAc...) asparagine glycosylation is present at asparagine 256. Helical transmembrane passes span 416 to 438 (VLAV…HGFF), 477 to 499 (AYSR…YGSL), and 525 to 547 (LVIV…QVNT). Asparagine 564 carries N-linked (GlcNAc...) asparagine glycosylation. The next 4 membrane-spanning stretches (helical) occupy residues 569–591 (LLSA…CFCY), 603–622 (IPVL…YHLS), 675–697 (LIVC…FIAL), and 704–721 (VLYG…YLLP). Asparagine 988, asparagine 1129, and asparagine 1391 each carry an N-linked (GlcNAc...) asparagine glycan. Disordered stretches follow at residues 1475-1556 (VQSG…HSIP) and 1577-1598 (TDPL…PTHA). Low complexity-rich tracts occupy residues 1485-1510 (ARAS…RTST) and 1518-1556 (RSST…HSIP). Residues 1582-1591 (QHHHPHHHPQ) are compositionally biased toward basic residues. Asparagine 1622 carries N-linked (GlcNAc...) asparagine glycosylation.

It belongs to the pecanex family.

It localises to the membrane. This chain is Pecanex-like protein 1, found in Takifugu rubripes (Japanese pufferfish).